Here is a 136-residue protein sequence, read N- to C-terminus: Small ribosomal subunit protein uS8c (136 aa).

The protein belongs to the universal ribosomal protein uS8 family. In terms of assembly, part of the 30S ribosomal subunit.

It localises to the plastid. One of the primary rRNA binding proteins, it binds directly to 16S rRNA central domain where it helps coordinate assembly of the platform of the 30S subunit. This is Small ribosomal subunit protein uS8c (rps8) from Helicosporidium sp. subsp. Simulium jonesii (Green alga).